The primary structure comprises 336 residues: UDP-3-O-acylglucosamine N-acyltransferase (336 aa).

The Proton acceptor role is filled by H236.

The protein belongs to the transferase hexapeptide repeat family. LpxD subfamily. As to quaternary structure, homotrimer.

The enzyme catalyses a UDP-3-O-[(3R)-3-hydroxyacyl]-alpha-D-glucosamine + a (3R)-hydroxyacyl-[ACP] = a UDP-2-N,3-O-bis[(3R)-3-hydroxyacyl]-alpha-D-glucosamine + holo-[ACP] + H(+). It participates in bacterial outer membrane biogenesis; LPS lipid A biosynthesis. Its function is as follows. Catalyzes the N-acylation of UDP-3-O-acylglucosamine using 3-hydroxyacyl-ACP as the acyl donor. Is involved in the biosynthesis of lipid A, a phosphorylated glycolipid that anchors the lipopolysaccharide to the outer membrane of the cell. The chain is UDP-3-O-acylglucosamine N-acyltransferase from Aromatoleum aromaticum (strain DSM 19018 / LMG 30748 / EbN1) (Azoarcus sp. (strain EbN1)).